Here is a 1907-residue protein sequence, read N- to C-terminus: Probable RNA-directed RNA polymerase (1907 aa).

The interval 42–61 (NTHNDHEETHGESPEVPKAS) is disordered. Residues 44-56 (HNDHEETHGESPE) show a composition bias toward basic and acidic residues.

Belongs to the totiviridae RNA-directed RNA polymerase family.

It catalyses the reaction RNA(n) + a ribonucleoside 5'-triphosphate = RNA(n+1) + diphosphate. RNA-dependent RNA polymerase which replicates the viral genome. Catalyzes the transcription of fully conservative plus-strand genomic RNAs that are extruded from the virion into the cytoplasm where they function as mRNAs for translation of viral proteins and also as substrates for encapsidation to form new virions. Once encapsidated, the positive strand is converted to dsRNA by the RNA-directed RNA polymerase. Displays ssRNA-binding activity. The sequence is that of Probable RNA-directed RNA polymerase (gag-pol) from Giardia intestinalis (Giardia lamblia).